The primary structure comprises 541 residues: Catalase (541 aa).

The disordered stretch occupies residues M1–Q20. Catalysis depends on residues H74 and N147. Heme is bound at residue Y357.

It belongs to the catalase family. It depends on heme as a cofactor.

It is found in the peroxisome matrix. The enzyme catalyses 2 H2O2 = O2 + 2 H2O. In terms of biological role, catalyzes the degradation of hydrogen peroxide (H(2)O(2)) generated by peroxisomal oxidases to water and oxygen, thereby protecting cells from the toxic effects of hydrogen peroxide. This Ascaris suum (Pig roundworm) protein is Catalase (CAT).